Reading from the N-terminus, the 657-residue chain is Penicillin-binding protein activator LpoA (657 aa).

A signal peptide spans 1-25 (MLSSTFVRSKAGLVPVILAALILAA). A lipid anchor (N-palmitoyl cysteine) is attached at Cys-26. A lipid anchor (S-diacylglycerol cysteine) is attached at Cys-26.

This sequence belongs to the LpoA family. As to quaternary structure, interacts with PBP1a.

Its subcellular location is the cell outer membrane. Functionally, regulator of peptidoglycan synthesis that is essential for the function of penicillin-binding protein 1A (PBP1a). The sequence is that of Penicillin-binding protein activator LpoA from Yersinia pestis bv. Antiqua (strain Angola).